Reading from the N-terminus, the 253-residue chain is 2,3-bisphosphoglycerate-dependent phosphoglycerate mutase (253 aa).

Substrate-binding positions include 12 to 19, 25 to 26, R64, 91 to 94, K102, and 118 to 119; these read RHGESEWN, TG, ERHY, and RR. H13 serves as the catalytic Tele-phosphohistidine intermediate. E91 functions as the Proton donor/acceptor in the catalytic mechanism. The tract at residues 126–148 is disordered; the sequence is PPLADGSEFSQSDDPRYASIPPE. 187-188 contributes to the substrate binding site; it reads GN.

It belongs to the phosphoglycerate mutase family. BPG-dependent PGAM subfamily.

The catalysed reaction is (2R)-2-phosphoglycerate = (2R)-3-phosphoglycerate. It participates in carbohydrate degradation; glycolysis; pyruvate from D-glyceraldehyde 3-phosphate: step 3/5. Functionally, catalyzes the interconversion of 2-phosphoglycerate and 3-phosphoglycerate. In Streptomyces avermitilis (strain ATCC 31267 / DSM 46492 / JCM 5070 / NBRC 14893 / NCIMB 12804 / NRRL 8165 / MA-4680), this protein is 2,3-bisphosphoglycerate-dependent phosphoglycerate mutase.